Consider the following 428-residue polypeptide: Probable oxidoreductase OrdL (428 aa).

This Rhizobium meliloti (strain 1021) (Ensifer meliloti) protein is Probable oxidoreductase OrdL (ordL).